A 441-amino-acid chain; its full sequence is Amino-acid acetyltransferase (441 aa).

The N-acetyltransferase domain occupies 295–434 (EKVRGAGIDD…KALYNFQRRS (140 aa)).

Belongs to the acetyltransferase family. ArgA subfamily.

It localises to the cytoplasm. The enzyme catalyses L-glutamate + acetyl-CoA = N-acetyl-L-glutamate + CoA + H(+). It functions in the pathway amino-acid biosynthesis; L-arginine biosynthesis; N(2)-acetyl-L-ornithine from L-glutamate: step 1/4. The protein is Amino-acid acetyltransferase of Photobacterium profundum (strain SS9).